We begin with the raw amino-acid sequence, 239 residues long: Ribosomal RNA small subunit methyltransferase A (239 aa).

S-adenosyl-L-methionine is bound by residues Asn-23, Ile-25, Gly-50, Glu-72, Asp-97, and Asn-116.

The protein belongs to the class I-like SAM-binding methyltransferase superfamily. rRNA adenine N(6)-methyltransferase family. RsmA subfamily.

The protein localises to the cytoplasm. It carries out the reaction adenosine(1518)/adenosine(1519) in 16S rRNA + 4 S-adenosyl-L-methionine = N(6)-dimethyladenosine(1518)/N(6)-dimethyladenosine(1519) in 16S rRNA + 4 S-adenosyl-L-homocysteine + 4 H(+). Its function is as follows. Specifically dimethylates two adjacent adenosines (A1518 and A1519) in the loop of a conserved hairpin near the 3'-end of 16S rRNA in the 30S particle. May play a critical role in biogenesis of 30S subunits. This Rickettsia felis (strain ATCC VR-1525 / URRWXCal2) (Rickettsia azadi) protein is Ribosomal RNA small subunit methyltransferase A.